A 555-amino-acid chain; its full sequence is Gamma-aminobutyric acid receptor subunit alpha-4 (555 aa).

An N-terminal signal peptide occupies residues Met-1–Gly-35. Residues Gln-36–Phe-259 lie on the Extracellular side of the membrane. Residue Asn-47 is glycosylated (N-linked (GlcNAc...) asparagine). A 4-aminobutanoate-binding site is contributed by Arg-100. N-linked (GlcNAc...) asparagine glycans are attached at residues Asn-144 and Asn-157. Thr-163 provides a ligand contact to 4-aminobutanoate. Cys-172 and Cys-186 are oxidised to a cystine. A helical transmembrane segment spans residues Met-260–Ile-280. The Cytoplasmic segment spans residues Asn-281 to Ser-284. The helical transmembrane segment at Val-285–Ser-305 threads the bilayer. Topologically, residues Ala-306–Ala-318 are extracellular. A helical membrane pass occupies residues Met-319–Asn-341. At Tyr-342–Lys-518 the chain is on the cytoplasmic side. Disordered regions lie at residues Lys-354–Pro-435 and Gly-495–Thr-516. Positions Ser-410–Ser-421 are enriched in low complexity. The segment covering Glu-422–Pro-435 has biased composition (polar residues). A helical membrane pass occupies residues Ile-519 to Lys-545. Residues Asp-546–Met-555 lie on the Extracellular side of the membrane.

The protein belongs to the ligand-gated ion channel (TC 1.A.9) family. Gamma-aminobutyric acid receptor (TC 1.A.9.5) subfamily. GABRA4 sub-subfamily. Heteropentamer, formed by a combination of alpha (GABRA1-6), beta (GABRB1-3), gamma (GABRG1-3), delta (GABRD), epsilon (GABRE), rho (GABRR1-3), pi (GABRP) and theta (GABRQ) chains, each subunit exhibiting distinct physiological and pharmacological properties. Expressed in the brain.

The protein resides in the cell membrane. Its subcellular location is the postsynaptic cell membrane. It catalyses the reaction chloride(in) = chloride(out). With respect to regulation, potentiated by histamine. Alpha subunit of the heteropentameric ligand-gated chloride channel gated by gamma-aminobutyric acid (GABA), a major inhibitory neurotransmitter in the brain. GABA-gated chloride channels, also named GABA(A) receptors (GABAAR), consist of five subunits arranged around a central pore and contain GABA active binding site(s) located at the alpha and beta subunit interface(s). When activated by GABA, GABAARs selectively allow the flow of chloride anions across the cell membrane down their electrochemical gradient. GABAARs containing alpha-4 are predominantly extrasynaptic, contributing to tonic inhibition in dentate granule cells and thalamic relay neurons. Extrasynaptic alpha-4-containing GABAARs control levels of excitability and network activity. GABAARs containing alpha-4 are often found with the delta or gamma-2 subunits, in combination with beta subunits. GABAAR containing alpha-4-beta-3-delta subunits can simultaneously bind GABA and histamine where histamine binds at the interface of two neighboring beta subunits, which may be involved in the regulation of sleep and wakefulness. This Bos taurus (Bovine) protein is Gamma-aminobutyric acid receptor subunit alpha-4 (GABRA4).